A 686-amino-acid chain; its full sequence is MCTMPATRDASGSGDASTDLIAARSLSSHQGQRSNLRIFKLLISCCLLMLCIYPNAWPWSIGPGSGPFSVSADSIKGRGDTHRLGEMGTSLSSSLPSSWLTQSNNHANISELLDNLLRGYDNSIRPDFGGPPATIEVDIMVRSMGPISEVDMTYSMDCYFRQSWVDKRLAFEGAQDTLALSVSMLARIWKPDTYFYNGKQSYLHTITTPNKFVRIYQNGRVLYSSRLTIKAGCPMNLADFPMDIQKCPLKFGSFGYTTSDVIYRWNKERPPVAIAEDMKLSQFDLVDCPAGNLTDIVYKAAAPRPQRRPFNNKDPPRPTSKVMTTFAGPAAKNQHVRGTGLKLDKGAFGTGRDATGGSGSTTGLSGTITLETNHPSEYSMLMVNFHLQRHMGNFLIQVYGPCCLLVVLSWVSFWLNREATADRVSLGITTVLTMTFLGLEARTDLPKVSYPTALDFFVFLSFGFIFATILQFAVVHYYTKYGSGECYFIIEELDSESGESETEPLTSDFRGSTESKIYEVIPLSMCAISMPPPPTRLGMLTSRNRRPRNRRHGLWSMKLLGLFDWRRRRKPPRADSDEDEDDEQTQLRANEAPTTSAAAAAAQAAAQAARISPPTGGRRRMSYYRREEMEARRKGKRTPQYNSVSKIDRASRIVFPLLFILINVFYWYGYLSRSSRILANTPDAST.

An N-terminal signal peptide occupies residues 1-58 (MCTMPATRDASGSGDASTDLIAARSLSSHQGQRSNLRIFKLLISCCLLMLCIYPNAWP). Topologically, residues 97-393 (SSWLTQSNNH…NFHLQRHMGN (297 aa)) are extracellular. An N-linked (GlcNAc...) asparagine glycan is attached at asparagine 108. Cysteine 233 and cysteine 247 form a disulfide bridge. Asparagine 292 carries an N-linked (GlcNAc...) asparagine glycan. Transmembrane regions (helical) follow at residues 394–414 (FLIQ…VSFW), 424–441 (VSLG…GLEA), and 456–476 (FFVF…AVVH). Residues 477–650 (YYTKYGSGEC…YNSVSKIDRA (174 aa)) are Cytoplasmic-facing. The interval 570-641 (KPPRADSDED…RRKGKRTPQY (72 aa)) is disordered. A compositionally biased stretch (polar residues) spans 586 to 596 (QLRANEAPTTS). The span at 597–609 (AAAAAAQAAAQAA) shows a compositional bias: low complexity. A helical membrane pass occupies residues 651 to 671 (SRIVFPLLFILINVFYWYGYL).

It belongs to the ligand-gated ion channel (TC 1.A.9) family. Gamma-aminobutyric acid receptor (TC 1.A.9.5) subfamily. As to quaternary structure, generally pentameric. There are five types of GABA(A) receptor chains: alpha, beta, gamma, delta, and rho. Interacts with Lcch3 (beta chain).

It is found in the postsynaptic cell membrane. It localises to the cell membrane. GABA, an inhibitory neurotransmitter, mediates neuronal inhibition by binding to the GABA receptor and opening an integral chloride channel. May combine with the ligand-gated ion channel subunit Lcch3 to form cation-selective GABA-gated ion channels. The protein is Gamma-aminobutyric acid receptor alpha-like (Grd) of Drosophila melanogaster (Fruit fly).